The sequence spans 245 residues: 8-amino-3,8-dideoxy-manno-octulosonate cytidylyltransferase (245 aa).

It belongs to the KdsB family.

It is found in the cytoplasm. The catalysed reaction is 8-amino-3,8-dideoxy-alpha-D-manno-octulosonate + CTP = CMP-8-amino-3,8-dideoxy-alpha-D-manno-oct-2-ulosonate + diphosphate. It functions in the pathway bacterial outer membrane biogenesis; lipopolysaccharide biosynthesis. Its function is as follows. Activates KDO8N (a required 8-carbon sugar) for incorporation into bacterial lipopolysaccharide in the Shewanella genus. In Shewanella baltica (strain OS223), this protein is 8-amino-3,8-dideoxy-manno-octulosonate cytidylyltransferase.